The sequence spans 349 residues: Selenide, water dikinase (349 aa).

The active site involves U19. Residue U19 is a non-standard amino acid, selenocysteine. Residues K22 and 50 to 52 contribute to the ATP site; that span reads LGD. D53 provides a ligand contact to Mg(2+). Residues D69, D92, and 140 to 142 each bind ATP; that span reads GHT. D92 contacts Mg(2+). D246 lines the Mg(2+) pocket.

Belongs to the selenophosphate synthase 1 family. Class I subfamily. As to quaternary structure, homodimer. Mg(2+) is required as a cofactor.

It catalyses the reaction hydrogenselenide + ATP + H2O = selenophosphate + AMP + phosphate + 2 H(+). Its function is as follows. Synthesizes selenophosphate from selenide and ATP. In Methanocaldococcus jannaschii (strain ATCC 43067 / DSM 2661 / JAL-1 / JCM 10045 / NBRC 100440) (Methanococcus jannaschii), this protein is Selenide, water dikinase.